We begin with the raw amino-acid sequence, 263 residues long: MSLVAEAFVSQIAAAEPWPENATLYQQLKGEQILLSDNAASLAVQAFLQMCNLPIKVVCRANAEYMSPSGKVPFIHVGNQVVSELGPIVQFVKAKGHSLSDGLEEVQKAEMKAYMELVNNMLLTAELYLQWCDEATVGEITHARYGSPYPWPLNHILAYQKQWEVKRKMKAIGWGKKTLDQVLEDVDQCCQALSQRLGTQPYFFNKQPTELDALVFGHLYTILTTQLTNDELSEKVKNYSNLLAFCRRIEQHYFEDRGKGRLS.

Serine 2 is subject to N-acetylserine.

Belongs to the metaxin family. In terms of assembly, interacts with MTX1/metaxin-1. Associates with the mitochondrial contact site and cristae organizing system (MICOS) complex, composed of at least MICOS10/MIC10, CHCHD3/MIC19, CHCHD6/MIC25, APOOL/MIC27, IMMT/MIC60, APOO/MIC23/MIC26 and QIL1/MIC13. This complex was also known under the names MINOS or MitOS complex. The MICOS complex associates with mitochondrial outer membrane proteins SAMM50, MTX1 and MTX2 (together described as components of the mitochondrial outer membrane sorting assembly machinery (SAM) complex) and DNAJC11, mitochondrial inner membrane protein TMEM11 and with HSPA9. The MICOS and SAM complexes together with DNAJC11 are part of a large protein complex spanning both membranes termed the mitochondrial intermembrane space bridging (MIB) complex.

The protein localises to the mitochondrion outer membrane. It localises to the mitochondrion. Involved in transport of proteins into the mitochondrion. This Homo sapiens (Human) protein is Metaxin-2 (MTX2).